The chain runs to 294 residues: Probable aspartoacylase (294 aa).

The Zn(2+) site is built by H14 and E17. Substrate-binding positions include R56 and 63–64 (NR). A Zn(2+)-binding site is contributed by H106. Substrate contacts are provided by E164 and Y275.

It belongs to the AspA/AstE family. Aspartoacylase subfamily. Zn(2+) is required as a cofactor.

It carries out the reaction an N-acyl-L-aspartate + H2O = a carboxylate + L-aspartate. The protein is Probable aspartoacylase of Nostoc sp. (strain PCC 7120 / SAG 25.82 / UTEX 2576).